The following is a 157-amino-acid chain: ATP synthase subunit b 1 (157 aa).

The chain crosses the membrane as a helical span at residues 7-29; sequence LFGQMVTFALLVWFTMKYVWPPL.

The protein belongs to the ATPase B chain family. F-type ATPases have 2 components, F(1) - the catalytic core - and F(0) - the membrane proton channel. F(1) has five subunits: alpha(3), beta(3), gamma(1), delta(1), epsilon(1). F(0) has three main subunits: a(1), b(2) and c(10-14). The alpha and beta chains form an alternating ring which encloses part of the gamma chain. F(1) is attached to F(0) by a central stalk formed by the gamma and epsilon chains, while a peripheral stalk is formed by the delta and b chains.

It is found in the cell inner membrane. Its function is as follows. F(1)F(0) ATP synthase produces ATP from ADP in the presence of a proton or sodium gradient. F-type ATPases consist of two structural domains, F(1) containing the extramembraneous catalytic core and F(0) containing the membrane proton channel, linked together by a central stalk and a peripheral stalk. During catalysis, ATP synthesis in the catalytic domain of F(1) is coupled via a rotary mechanism of the central stalk subunits to proton translocation. Component of the F(0) channel, it forms part of the peripheral stalk, linking F(1) to F(0). This is ATP synthase subunit b 1 from Methylococcus capsulatus (strain ATCC 33009 / NCIMB 11132 / Bath).